The chain runs to 401 residues: Carboxybiotin decarboxylase (401 aa).

A run of 10 helical transmembrane segments spans residues 20–40, 46–66, 70–90, 107–127, 131–151, 173–193, 244–264, 275–295, 306–326, and 380–400; these read VISI…YFGF, PLIM…VLFL, VVGT…VNLM, LIAC…FILI, ASII…IIGI, MVLF…AIIA, LCLL…GIAI, LLET…LGAL, ISLI…GGVL, and VCGL…LFLL.

It is found in the cell membrane. The enzyme catalyses N(6)-carboxybiotinyl-L-lysyl-[protein] + n Na(+)(in) + H(+) = N(6)-biotinyl-L-lysyl-[protein] + n Na(+)(out) + CO2. Beta subunit of the biotin-dependent malonate decarboxylase multienzyme complex (EC 7.2.4.4). Acts as an integral membrane-bound carboxybiotin protein decarboxylase by releasing the carboxyl group of the carboxylated biotin carrier MADF. The free energy of the decarboxylation reaction is used to pump Na(+) out of the cell. The polypeptide is Carboxybiotin decarboxylase (madB) (Malonomonas rubra).